The chain runs to 268 residues: Helix-loop-helix protein 6 (268 aa).

Residues 117 to 130 (QSQVQPQLPTQSQP) show a composition bias toward low complexity. Positions 117–140 (QSQVQPQLPTQSQPKPSSKASLDT) are disordered. The segment covering 131-140 (KPSSKASLDT) has biased composition (polar residues). In terms of domain architecture, bHLH spans 173-225 (SSVWKRNERERCRVRNVNDGYERLRKHLPVHFDEKRISKVDTLRLAIRYIKHL).

Expressed in the gland cells of the pharynx and weakly in the pharyngeal neuron.

It localises to the nucleus. Functionally, transcription factor that regulates the development of the g2 pharyngeal gland cells and pharyngeal gland function and thereby is required for feeding. Required for the expression of a number of genes in the pharyngeal gland, possibly by binding to the E box motif (5'-CANNTG-3') in the promoter region of these genes. Positively regulates the expression of genes encoding mucin-like proteins, which lubricate the pharyngeal tract to ensure efficient passage of the bacterial food source. Exhibits pharyngeal gland-specific positive autoregulation activity. In Caenorhabditis elegans, this protein is Helix-loop-helix protein 6 (hlh-6).